Consider the following 416-residue polypeptide: Phosphoglycerate kinase (416 aa).

Substrate is bound by residues 24-26, R40, 63-66, R122, and R162; these read DLN and HLGR. ATP-binding positions include K212, G300, E331, and 360–363; that span reads GGDS.

The protein belongs to the phosphoglycerate kinase family. Monomer.

The protein resides in the cytoplasm. The catalysed reaction is (2R)-3-phosphoglycerate + ATP = (2R)-3-phospho-glyceroyl phosphate + ADP. It functions in the pathway carbohydrate degradation; glycolysis; pyruvate from D-glyceraldehyde 3-phosphate: step 2/5. The polypeptide is Phosphoglycerate kinase (Mycobacterium ulcerans (strain Agy99)).